A 551-amino-acid polypeptide reads, in one-letter code: BAG family molecular chaperone regulator 8, chloroplastic (551 aa).

A compositionally biased stretch (basic residues) spans 1–19 (MASHHHHNHNHVCSRHQNH). The interval 1–46 (MASHHHHNHNHVCSRHQNHHNNTPQFATSPNCCNKSNHPSPPPAED) is disordered. A chloroplast-targeting transit peptide spans 1–52 (MASHHHHNHNHVCSRHQNHHNNTPQFATSPNCCNKSNHPSPPPAEDNLLHLV). A compositionally biased stretch (polar residues) spans 20–38 (HNNTPQFATSPNCCNKSNH). The 30-residue stretch at 131–160 (RDSAARVIQTHFRSYLVHRSISFRQLKELA) folds into the IQ domain. The region spanning 147-228 (VHRSISFRQL…RFVQYVDDCV (82 aa)) is the BAG domain. Residues 246-281 (GKKPQGFGTSSEDEDNNADMSDDSEEVPVSSIDKRK) are disordered. Over residues 256-271 (SEDEDNNADMSDDSEE) the composition is skewed to acidic residues. At Ser332 the chain carries Phosphoserine. 2 disordered regions span residues 414 to 433 (DEGKRRSSKTGSRVLVKGSG) and 450 to 551 (NVYK…KMEP). The segment covering 479–499 (GEEKGNVNEVEEIKYVPKENE) has biased composition (basic and acidic residues). The segment covering 500-513 (SFEEEEEKETDSEN) has biased composition (acidic residues). The segment covering 522–534 (EGDKRVTKKEVQH) has biased composition (basic and acidic residues).

As to quaternary structure, binds to the ATPase domain of HSP70/HSC70 chaperones.

Its subcellular location is the plastid. The protein resides in the chloroplast. In terms of biological role, co-chaperone that regulates diverse cellular pathways, such as programmed cell death and stress responses. The chain is BAG family molecular chaperone regulator 8, chloroplastic (BAG1) from Arabidopsis thaliana (Mouse-ear cress).